The following is a 470-amino-acid chain: Histone deacetylase HOS1 (470 aa).

The histone deacetylase stretch occupies residues 47-392 (LTFPYARKDD…YTYLTWCVTK (346 aa)). Serine 110 bears the Phosphoserine mark. Histidine 211 is a catalytic residue.

The protein belongs to the histone deacetylase family. HD type 1 subfamily.

The protein resides in the nucleus. It catalyses the reaction N(6)-acetyl-L-lysyl-[histone] + H2O = L-lysyl-[histone] + acetate. Functionally, responsible for the deacetylation of lysine residues on the N-terminal part of the core histones (H2A, H2B, H3 and H4). Histone deacetylation plays an important role in transcriptional regulation, cell cycle progression and developmental events. Histone deacetylases act via the formation of large multiprotein complexes. This Saccharomyces cerevisiae (strain ATCC 204508 / S288c) (Baker's yeast) protein is Histone deacetylase HOS1 (HOS1).